A 327-amino-acid chain; its full sequence is Glycerol-3-phosphate dehydrogenase [NAD(P)+] (327 aa).

NADPH is bound by residues Ser10, Phe11, Arg31, and Lys108. 3 residues coordinate sn-glycerol 3-phosphate: Lys108, Gly136, and Ser138. Ala140 contacts NADPH. Sn-glycerol 3-phosphate is bound by residues Lys191, Asp246, Ser256, Arg257, and Asn258. Lys191 acts as the Proton acceptor in catalysis. Arg257 is a binding site for NADPH. Residues Leu281 and Glu283 each contribute to the NADPH site.

This sequence belongs to the NAD-dependent glycerol-3-phosphate dehydrogenase family.

Its subcellular location is the cytoplasm. It catalyses the reaction sn-glycerol 3-phosphate + NAD(+) = dihydroxyacetone phosphate + NADH + H(+). It carries out the reaction sn-glycerol 3-phosphate + NADP(+) = dihydroxyacetone phosphate + NADPH + H(+). The protein operates within membrane lipid metabolism; glycerophospholipid metabolism. Functionally, catalyzes the reduction of the glycolytic intermediate dihydroxyacetone phosphate (DHAP) to sn-glycerol 3-phosphate (G3P), the key precursor for phospholipid synthesis. The chain is Glycerol-3-phosphate dehydrogenase [NAD(P)+] from Ehrlichia ruminantium (strain Welgevonden).